Consider the following 280-residue polypeptide: Formamidopyrimidine-DNA glycosylase (280 aa).

Pro2 acts as the Schiff-base intermediate with DNA in catalysis. Glu3 (proton donor) is an active-site residue. Lys53 serves as the catalytic Proton donor; for beta-elimination activity. The DNA site is built by His91, Arg110, and Arg152. The FPG-type zinc-finger motif lies at 239–273 (HVYGRAGQPCDRCGTPIEKIVLGQRGTHFCPVCQP). The Proton donor; for delta-elimination activity role is filled by Arg263.

Belongs to the FPG family. Monomer. Zn(2+) is required as a cofactor.

The catalysed reaction is Hydrolysis of DNA containing ring-opened 7-methylguanine residues, releasing 2,6-diamino-4-hydroxy-5-(N-methyl)formamidopyrimidine.. It catalyses the reaction 2'-deoxyribonucleotide-(2'-deoxyribose 5'-phosphate)-2'-deoxyribonucleotide-DNA = a 3'-end 2'-deoxyribonucleotide-(2,3-dehydro-2,3-deoxyribose 5'-phosphate)-DNA + a 5'-end 5'-phospho-2'-deoxyribonucleoside-DNA + H(+). In terms of biological role, involved in base excision repair of DNA damaged by oxidation or by mutagenic agents. Acts as a DNA glycosylase that recognizes and removes damaged bases. Has a preference for oxidized purines, such as 7,8-dihydro-8-oxoguanine (8-oxoG). Has AP (apurinic/apyrimidinic) lyase activity and introduces nicks in the DNA strand. Cleaves the DNA backbone by beta-delta elimination to generate a single-strand break at the site of the removed base with both 3'- and 5'-phosphates. The chain is Formamidopyrimidine-DNA glycosylase (mutM) from Deinococcus radiodurans (strain ATCC 13939 / DSM 20539 / JCM 16871 / CCUG 27074 / LMG 4051 / NBRC 15346 / NCIMB 9279 / VKM B-1422 / R1).